Consider the following 225-residue polypeptide: UPF0758 protein XOO0495 (225 aa).

The region spanning 102–224 (ALSDPPSVGR…PVSLAERGWL (123 aa)) is the MPN domain. 3 residues coordinate Zn(2+): His173, His175, and Asp186. The JAMM motif signature appears at 173-186 (HNHPSGNPEPSKAD).

This sequence belongs to the UPF0758 family.

This chain is UPF0758 protein XOO0495, found in Xanthomonas oryzae pv. oryzae (strain KACC10331 / KXO85).